We begin with the raw amino-acid sequence, 223 residues long: Deoxyribose-phosphate aldolase (223 aa).

Asp89 acts as the Proton donor/acceptor in catalysis. Lys154 functions as the Schiff-base intermediate with acetaldehyde in the catalytic mechanism. Lys183 acts as the Proton donor/acceptor in catalysis.

Belongs to the DeoC/FbaB aldolase family. DeoC type 1 subfamily.

The protein resides in the cytoplasm. It carries out the reaction 2-deoxy-D-ribose 5-phosphate = D-glyceraldehyde 3-phosphate + acetaldehyde. It participates in carbohydrate degradation; 2-deoxy-D-ribose 1-phosphate degradation; D-glyceraldehyde 3-phosphate and acetaldehyde from 2-deoxy-alpha-D-ribose 1-phosphate: step 2/2. Catalyzes a reversible aldol reaction between acetaldehyde and D-glyceraldehyde 3-phosphate to generate 2-deoxy-D-ribose 5-phosphate. The sequence is that of Deoxyribose-phosphate aldolase from Thermoanaerobacter sp. (strain X514).